A 647-amino-acid polypeptide reads, in one-letter code: Calmodulin-binding protein 60 B (647 aa).

Residues 1 to 10 (MMDSGNNNMN) are compositionally biased toward polar residues. The interval 1-26 (MMDSGNNNMNRAKRNLDGNDDDQPER) is disordered. The interval 8–85 (NMNRAKRNLD…TGSSGSSPKR (78 aa)) is calmodulin-binding. The Nuclear localization signal signature appears at 12 to 19 (AKRNLDGN). Residues 155–278 (EDDEDWTQEE…AFHKKLTAEG (124 aa)) form a DNA-binding region.

The protein belongs to the plant ACBP60 protein family. Interacts with calmodulin (CaM). Expressed in leaves, stems, flowers, developing seeds and root.

Its subcellular location is the nucleus. Functionally, transcription activator that binds DNA in a sequence-specific manner, likely 5'-GAAATTTTGG-3', to promote the expression of target genes. In Arabidopsis thaliana (Mouse-ear cress), this protein is Calmodulin-binding protein 60 B.